Here is a 326-residue protein sequence, read N- to C-terminus: Membrane-associated kinase regulator 5 (326 aa).

2 disordered regions span residues 188-239 (TKKQ…GMSP) and 267-326 (GSRE…KISD). Low complexity-rich tracts occupy residues 190 to 202 (KQSS…PTSS) and 270 to 305 (ESSL…SSDS).

In terms of tissue distribution, expressed in roots.

The protein resides in the cell membrane. It is found in the cytoplasm. Its subcellular location is the cytosol. In terms of biological role, positive effector of CLE45 peptide signaling. Post-transcriptionally regulated amplifier of the CLE45 peptide signal that acts downstream of BAM3 in the regulation of the transition of root protophloem cells from proliferation to differentiation; thus preventing primary root elongation but stimulating lateral roots development. This chain is Membrane-associated kinase regulator 5, found in Arabidopsis thaliana (Mouse-ear cress).